An 862-amino-acid polypeptide reads, in one-letter code: Rab GTPase-binding effector protein 1 (862 aa).

Ala-2 carries the post-translational modification N-acetylalanine. A coiled-coil region spans residues 11-345 (DVSLQQRVAE…KKTDTEEEVK (335 aa)). N6-acetyllysine is present on Lys-282. The disordered stretch occupies residues 315 to 374 (ELKKKDQEEDEQQRVNKRKDNKKTDTEEEVKIPVVCALTQEESSTPLSNEEEHLDSTHGS). Basic and acidic residues predominate over residues 336-345 (KKTDTEEEVK). Phosphoserine is present on residues Ser-374, Ser-377, and Ser-407. Residue Thr-408 is modified to Phosphothreonine. A Phosphoserine modification is found at Ser-410. Residues 534–816 (DMCSNYEKQL…LQTELDVSEQ (283 aa)) are a coiled coil.

Belongs to the rabaptin family. In terms of assembly, heterodimer with RABGEF1. The heterodimer binds RAB4A and RAB5A that have been activated by GTP-binding. Interacts with TSC2. Interacts with GGA1 (via GAE domain), GGA2 (via GAE domain) and GGA3 (via GAE domain). Interacts with AP1G1 (via GAE domain). Interacts with AP1G2 (via GAE domain). Interacts with ECPAS. Interacts with KCNH1. Interacts with PKD1 (via C-terminal domain) and GGA1; the interactions recruit PKD1:PKD2 complex to GGA1 and ARL3 at trans-Golgi network. Interacts with KCNH1. In terms of processing, proteolytic cleavage by caspases in apoptotic cells causes loss of endosome fusion activity.

The protein resides in the cytoplasm. The protein localises to the early endosome. It localises to the recycling endosome. Its subcellular location is the cytoplasmic vesicle. In terms of biological role, rab effector protein acting as linker between gamma-adaptin, RAB4A and RAB5A. Involved in endocytic membrane fusion and membrane trafficking of recycling endosomes. Involved in KCNH1 channels trafficking to and from the cell membrane. Stimulates RABGEF1 mediated nucleotide exchange on RAB5A. Mediates the traffic of PKD1:PKD2 complex from the endoplasmic reticulum through the Golgi to the cilium. This is Rab GTPase-binding effector protein 1 (Rabep1) from Mus musculus (Mouse).